The following is a 688-amino-acid chain: Glycine--tRNA ligase beta subunit (688 aa).

The protein belongs to the class-II aminoacyl-tRNA synthetase family. In terms of assembly, tetramer of two alpha and two beta subunits.

It localises to the cytoplasm. The catalysed reaction is tRNA(Gly) + glycine + ATP = glycyl-tRNA(Gly) + AMP + diphosphate. This chain is Glycine--tRNA ligase beta subunit, found in Desulforudis audaxviator (strain MP104C).